A 108-amino-acid chain; its full sequence is UPF0060 membrane protein BLi00854/BL03049 (108 aa).

Helical transmembrane passes span isoleucine 3–tryptophan 23, proline 31–phenylalanine 51, valine 60–aspartate 80, and leucine 86–proline 106.

It belongs to the UPF0060 family.

The protein resides in the cell membrane. This chain is UPF0060 membrane protein BLi00854/BL03049, found in Bacillus licheniformis (strain ATCC 14580 / DSM 13 / JCM 2505 / CCUG 7422 / NBRC 12200 / NCIMB 9375 / NCTC 10341 / NRRL NRS-1264 / Gibson 46).